Reading from the N-terminus, the 453-residue chain is GTPase Der (453 aa).

EngA-type G domains lie at 3–167 (PIIV…ISEK) and 187–360 (IKVA…EDSK). GTP-binding positions include 9–16 (GRTNVGKS), 57–61 (DTAGL), 119–122 (NKID), 193–200 (GRPNVGKS), 240–244 (DTAGA), and 305–308 (NKCD). The KH-like domain occupies 361–445 (RKISTSTLIK…PIQIQFKDNE (85 aa)).

This sequence belongs to the TRAFAC class TrmE-Era-EngA-EngB-Septin-like GTPase superfamily. EngA (Der) GTPase family. In terms of assembly, associates with the 50S ribosomal subunit.

Its function is as follows. GTPase that plays an essential role in the late steps of ribosome biogenesis. The sequence is that of GTPase Der from Buchnera aphidicola subsp. Acyrthosiphon pisum (strain 5A).